An 860-amino-acid polypeptide reads, in one-letter code: Leucine--tRNA ligase (860 aa).

A 'HIGH' region motif is present at residues 42-52 (PYPSGRLHMGH). The 'KMSKS' region signature appears at 619 to 623 (KMSKS). Lysine 622 is a binding site for ATP.

The protein belongs to the class-I aminoacyl-tRNA synthetase family.

Its subcellular location is the cytoplasm. It carries out the reaction tRNA(Leu) + L-leucine + ATP = L-leucyl-tRNA(Leu) + AMP + diphosphate. This is Leucine--tRNA ligase from Escherichia coli O127:H6 (strain E2348/69 / EPEC).